We begin with the raw amino-acid sequence, 381 residues long: Putative heat shock protein HSP 90-beta 2 (381 aa).

3 residues coordinate ATP: Asn-46, Asp-88, and Lys-107. Over residues 145–174 (KEISDGKAEEEKGEKEEENKDDEEKPKIED) the composition is skewed to basic and acidic residues. Residues 145–192 (KEISDGKAEEEKGEKEEENKDDEEKPKIEDVGSDEEDDSGKDKKKKTK) are disordered. A Phosphoserine modification is found at Ser-177. Positions 315 to 347 (ELPEDGEEKKRMEERKAKFENLCKFMKETLDKK) form a coiled coil.

This sequence belongs to the heat shock protein 90 family. In terms of assembly, homodimer.

It localises to the cytoplasm. Putative molecular chaperone that may promote the maturation, structural maintenance and proper regulation of specific target proteins. This Homo sapiens (Human) protein is Putative heat shock protein HSP 90-beta 2 (HSP90AB2P).